Reading from the N-terminus, the 512-residue chain is Allene oxide synthase 1, chloroplastic (512 aa).

Residues 1–25 (MATAAACISFASPSPARVVIRRQTR) constitute a chloroplast transit peptide. The interval 23-43 (QTRASASASATDRQEVVSPKR) is disordered. Positions 127, 158, and 162 each coordinate heme b. Asn-315 is a (13S)-hydroperoxy-(9Z,11E,15Z)-octadecatrienoate binding site. Lys-463 and Cys-465 together coordinate heme b.

The protein belongs to the cytochrome P450 family. It depends on heme b as a cofactor. In terms of tissue distribution, expressed in coleoptiles, and at lower level in leaves of dark-grown seedlings.

Its subcellular location is the plastid. It localises to the chloroplast membrane. It carries out the reaction (13S)-hydroperoxy-(9Z,11E,15Z)-octadecatrienoate = (9Z,13S,15Z)-12,13-epoxyoctadeca-9,11,15-trienoate + H2O. Its pathway is lipid metabolism; oxylipin biosynthesis. Involved in the biosynthesis of jasmonic acid, a growth regulator that is implicated also as a signaling molecule in plant defense. Converts 13-hydroperoxylinolenic acid to 12,13-epoxylinolenic acid. The chain is Allene oxide synthase 1, chloroplastic (CYP74A1) from Oryza sativa subsp. japonica (Rice).